The primary structure comprises 357 residues: Putative minor fimbrial subunit PmfE (357 aa).

A signal peptide spans 1-28 (MILNKKNIHSKSVMLFCAGIVSLMPLHA).

It is found in the fimbrium. This is Putative minor fimbrial subunit PmfE (pmfE) from Proteus mirabilis (strain HI4320).